The chain runs to 608 residues: NADH-quinone oxidoreductase subunit C/D (608 aa).

Positions 1–199 (MSAASSLAPQ…EPFHLSTEKE (199 aa)) are NADH dehydrogenase I subunit C. Residues 223 to 608 (DFMFLNLGPN…IDFVMADVDR (386 aa)) are NADH dehydrogenase I subunit D.

In the N-terminal section; belongs to the complex I 30 kDa subunit family. This sequence in the C-terminal section; belongs to the complex I 49 kDa subunit family. As to quaternary structure, NDH-1 is composed of 13 different subunits. Subunits NuoB, CD, E, F, and G constitute the peripheral sector of the complex.

Its subcellular location is the cell inner membrane. It catalyses the reaction a quinone + NADH + 5 H(+)(in) = a quinol + NAD(+) + 4 H(+)(out). Functionally, NDH-1 shuttles electrons from NADH, via FMN and iron-sulfur (Fe-S) centers, to quinones in the respiratory chain. The immediate electron acceptor for the enzyme in this species is believed to be ubiquinone. Couples the redox reaction to proton translocation (for every two electrons transferred, four hydrogen ions are translocated across the cytoplasmic membrane), and thus conserves the redox energy in a proton gradient. This is NADH-quinone oxidoreductase subunit C/D from Nitrosospira multiformis (strain ATCC 25196 / NCIMB 11849 / C 71).